Consider the following 172-residue polypeptide: Adenine phosphoribosyltransferase (172 aa).

It belongs to the purine/pyrimidine phosphoribosyltransferase family. Homodimer.

The protein localises to the cytoplasm. The catalysed reaction is AMP + diphosphate = 5-phospho-alpha-D-ribose 1-diphosphate + adenine. The protein operates within purine metabolism; AMP biosynthesis via salvage pathway; AMP from adenine: step 1/1. Its function is as follows. Catalyzes a salvage reaction resulting in the formation of AMP, that is energically less costly than de novo synthesis. The chain is Adenine phosphoribosyltransferase from Trichormus variabilis (strain ATCC 29413 / PCC 7937) (Anabaena variabilis).